Reading from the N-terminus, the 160-residue chain is Eukaryotic translation initiation factor 5A-1/2 (160 aa).

Basic and acidic residues predominate over residues 1–12 (MSDEEHHFESKA). The tract at residues 1-21 (MSDEEHHFESKADAGASKTYP) is disordered. Lysine 52 is modified (hypusine).

This sequence belongs to the eIF-5A family. In terms of processing, lys-52 undergoes hypusination, a unique post-translational modification that consists in the addition of a butylamino group from spermidine to lysine side chain, leading to the formation of the unusual amino acid hypusine. eIF-5As are the only known proteins to undergo this modification, which is essential for their function.

Its function is as follows. Translation factor that promotes translation elongation and termination, particularly upon ribosome stalling at specific amino acid sequence contexts. Binds between the exit (E) and peptidyl (P) site of the ribosome and promotes rescue of stalled ribosome: specifically required for efficient translation of polyproline-containing peptides as well as other motifs that stall the ribosome. Acts as a ribosome quality control (RQC) cofactor by joining the RQC complex to facilitate peptidyl transfer during CAT tailing step. The protein is Eukaryotic translation initiation factor 5A-1/2 (EIF5A1) of Solanum tuberosum (Potato).